The chain runs to 741 residues: Ethylene receptor 2 (741 aa).

3 helical membrane passes run 23–43 (ISDFFIAIAYFSIPLELIYFV), 53–73 (WVLVQFGAFIVLCGATHLINL), and 92–112 (IMTAVVSCATALMLVHIIPDL). Cu cation is bound by residues Cys65 and His69. Residues 158–307 (DRHTILKTTL…VVADQVAVAL (150 aa)) enclose the GAF domain. Residues 350 to 589 (VMNHEMRTPM…TFVVKLGIPE (240 aa)) form the Histidine kinase domain. His353 carries the phosphohistidine; by autocatalysis modification. One can recognise a Response regulatory domain in the interval 615 to 732 (KVLLLDDNGV…KMRNVLSNLL (118 aa)). At Asp663 the chain carries 4-aspartylphosphate.

The protein belongs to the ethylene receptor family. Homodimer; disulfide-linked. Cu cation serves as cofactor. Post-translationally, activation probably requires a transfer of a phosphate group between a His in the transmitter domain and an Asp of the receiver domain.

The protein localises to the endoplasmic reticulum membrane. The catalysed reaction is ATP + protein L-histidine = ADP + protein N-phospho-L-histidine.. In terms of biological role, may act early in the ethylene signal transduction pathway, possibly as an ethylene receptor, or as a regulator of the pathway. The chain is Ethylene receptor 2 (ETR2) from Pelargonium hortorum (Common geranium).